The chain runs to 357 residues: Phosphoribosylformylglycinamidine cyclo-ligase (357 aa).

This sequence belongs to the AIR synthase family.

The protein localises to the cytoplasm. The enzyme catalyses 2-formamido-N(1)-(5-O-phospho-beta-D-ribosyl)acetamidine + ATP = 5-amino-1-(5-phospho-beta-D-ribosyl)imidazole + ADP + phosphate + H(+). Its pathway is purine metabolism; IMP biosynthesis via de novo pathway; 5-amino-1-(5-phospho-D-ribosyl)imidazole from N(2)-formyl-N(1)-(5-phospho-D-ribosyl)glycinamide: step 2/2. In Rhizobium johnstonii (strain DSM 114642 / LMG 32736 / 3841) (Rhizobium leguminosarum bv. viciae), this protein is Phosphoribosylformylglycinamidine cyclo-ligase.